A 257-amino-acid polypeptide reads, in one-letter code: Hydroxyacylglutathione hydrolase (257 aa).

Residues His54, His56, Asp58, His59, His113, Asp137, and His175 each contribute to the Zn(2+) site.

Belongs to the metallo-beta-lactamase superfamily. Glyoxalase II family. Monomer. Requires Zn(2+) as cofactor.

The enzyme catalyses an S-(2-hydroxyacyl)glutathione + H2O = a 2-hydroxy carboxylate + glutathione + H(+). It functions in the pathway secondary metabolite metabolism; methylglyoxal degradation; (R)-lactate from methylglyoxal: step 2/2. In terms of biological role, thiolesterase that catalyzes the hydrolysis of S-D-lactoyl-glutathione to form glutathione and D-lactic acid. The chain is Hydroxyacylglutathione hydrolase from Crocosphaera subtropica (strain ATCC 51142 / BH68) (Cyanothece sp. (strain ATCC 51142)).